Reading from the N-terminus, the 339-residue chain is NmrA-like family domain-containing oxidoreductase cpsB (339 aa).

Position 142 (Lys142) interacts with NADP(+).

The protein belongs to the NmrA-type oxidoreductase family.

It catalyses the reaction didehydrocampesine A + 2 AH2 = campesine A + 2 A. It functions in the pathway alkaloid biosynthesis. Oxidoreductase; part of the gene cluster that mediates the biosynthesis of campesine G, a dimeric indole piperazine alkaloid that shows good insecticidal activity Galleria mellonella. Within the pathway, cpsB reduces the unstable (S,S)-trypyl-valyl dihydropiperazine (didehydrocampesine A) intermediate to (S, S)-trypyl-valyl-piperazine (campesine A) using two equivalents of NAD(P)H. The non-canonical non-ribosomal peptide synthetase cpsA catalyzes the first steps of the pathway by producing L-tryptophanal and L-valinal from their respective amino-acids. These products condensate spontaneously to form trypyl-valyl pyrazine also known as didehydrocampesine A. The NmrA-like family domain-containing oxidoreductase cpsB is the next enzyme in cps pathway and reduces the unstable didehydrocampesine A to campesine A. The methyltransferase cpsF and the acetyltransferase cpsE both recognize N13 of piperazine ring to carry out methylation and acetylation of campesine A to produce campesine C and B, respectively. The cytochrome P450 monooxygenase cpsD then acts as a dimerase that catalyzes oxidative heterocoupling between campesine B and C to produce heterodimers with unexpected 6/5/6/6/6/6/5/6 eight-ring scaffold called campesine D. Finally,the cytochrome P450 monooxygenase cpsC is a regioselective dehydrogenase that catalyzes dehydrogenation reaction towards C2-N1 to produce campesine G. The sequence is that of NmrA-like family domain-containing oxidoreductase cpsB from Aspergillus campestris (strain IBT 28561).